A 1209-amino-acid polypeptide reads, in one-letter code: MKFSKEIEVFNPPLASSASSGPWVHSVFAFTHSWPRKTLFKRDSAVTHRLYGDISRDFQGTSENGVIFQKCAVVSVQSEWPSAHVRLFVNNTRTPTAANLSDLFLLDNITGLTIRESAGNQTSRGFQAFRKKFLQVGDSFSVSYTASLEARDVGSGDILLLPAQLSFQSSSPNRTQLKAPFTITAEEKITVLPNHGLHAAGFCVAFILSLVLTWAVLFFMVRYQCVKGSSLTRHQVQHHENKLEHSQFTSADGVNEDLALNDQMIDILSSEDPGSMLQALEELEIATLNRADSDLEACRTQISKDIIALLLKNLTSSGQLSPQVERRMGAVFKKQFLLLEKEIQEEYDRKMVALTAECDLETRKKTESQYQREMAAMEEAEEVLKRVSERSAVECSSLLRTLHGLEQEHLRRSLALQQEEDLAKAHRQLAIFQRNELHNIFFTQIKSAIFKGELKPEAAKMLLQDYSKIQESVEELMDFFQASKRYHLSKRFGHREYLVQNIQSSETRMQGLLSTASAQLTLLIQKHERAGYLDEDQMQVLLERAQTEVFSIKQKLDNDLKQEKKKLHQKLIIKRRREMLQKHKEQRREQLSIAEASGAAEDAGQYLGQWRGLMAEHSAALEELQERLDQAALDELRALTLSLSEKATEELRRLQNSGMTQELLKRGVPWLFLQQILEEHSRDLAARAERLEGEERDRGQEGVQSVRQRLKDDALEASTEEQAELRHWEHLIFTKLCSSAFSLSEEELLGMRQEVHGCFAQMDRSLALPKIRARVLLQRFQTAWREAEFLKLDQAMTAPELQPQSKARKPRSKSRSKIDLLKKCTEDKIQLFKEQAPEDLVEKVRGELLRERVQQLEAQEGLFAESLVSLQFQKAARMARTLWAYTALLSIQDLLLEELNSSETLTKSACMQILESHSPELQELERKLEDQLAHQEAAQLQRALDSWQQWAGEGPALLQEPEETDSERHVSAVLQRALSKGQKLLEYHQQSLREEQEDSVVLEDLLENMETDTFVTLYGQELRLASYLSKLTMLPGGTLRRLLTVALPAASQAELLAVLDSVGQKHQDHSVENDGSRVQADLGRRGKHQGWWQALESKLRGELINRGLEKMLWAQKRKESILKKTCPPLRERVIFSGKRSWPHLSLESTDELTPVPIVGAEAVDLLNTGEKLFIFRNPKEPEISLHVPPRKKKKNFLNAKKAAWALGLN.

Residues 1–200 are Extracellular-facing; that stretch reads MKFSKEIEVF…VLPNHGLHAA (200 aa). A glycan (N-linked (GlcNAc...) asparagine) is linked at Asn-120. The chain crosses the membrane as a helical span at residues 201–221; it reads GFCVAFILSLVLTWAVLFFMV. Residues 222-1209 are Cytoplasmic-facing; sequence RYQCVKGSSL…KKAAWALGLN (988 aa). 3 coiled-coil regions span residues 355–394, 553–697, and 920–1012; these read TAEC…SAVE, KQKL…EERD, and ELQE…METD. Over residues 689–700 the composition is skewed to basic and acidic residues; sequence ERLEGEERDRGQ. Residues 689-714 are disordered; that stretch reads ERLEGEERDRGQEGVQSVRQRLKDDA.

Component of the EvC complex composed of EFCAB7, IQCE, EVC2 and EVC; built from two subcomplexes, EVC2:EVC and EFCAB7:IQCE. Interacts with EVC. Interacts (via N-terminal end) with EFCAB7. Interacts (via N-terminal end) with IQCE.

It is found in the cell membrane. It localises to the cytoplasm. Its subcellular location is the cytoskeleton. The protein resides in the cilium basal body. The protein localises to the cell projection. It is found in the cilium. It localises to the cilium membrane. Its subcellular location is the nucleus. Functionally, component of the EvC complex that positively regulates ciliary Hedgehog (Hh) signaling. Plays a critical role in bone formation and skeletal development. May be involved in early embryonic morphogenesis. This is Limbin (EVC2) from Bos taurus (Bovine).